Here is a 491-residue protein sequence, read N- to C-terminus: UDP-N-acetylmuramate--L-alanine ligase (491 aa).

Residue 126-132 (GTHGKTT) participates in ATP binding.

The protein belongs to the MurCDEF family.

The protein resides in the cytoplasm. It carries out the reaction UDP-N-acetyl-alpha-D-muramate + L-alanine + ATP = UDP-N-acetyl-alpha-D-muramoyl-L-alanine + ADP + phosphate + H(+). It participates in cell wall biogenesis; peptidoglycan biosynthesis. In terms of biological role, cell wall formation. The polypeptide is UDP-N-acetylmuramate--L-alanine ligase (Photorhabdus laumondii subsp. laumondii (strain DSM 15139 / CIP 105565 / TT01) (Photorhabdus luminescens subsp. laumondii)).